Here is a 235-residue protein sequence, read N- to C-terminus: Urease accessory protein UreF (235 aa).

The protein belongs to the UreF family. UreD, UreF and UreG form a complex that acts as a GTP-hydrolysis-dependent molecular chaperone, activating the urease apoprotein by helping to assemble the nickel containing metallocenter of UreC. The UreE protein probably delivers the nickel.

The protein localises to the cytoplasm. Functionally, required for maturation of urease via the functional incorporation of the urease nickel metallocenter. The polypeptide is Urease accessory protein UreF (Pseudoalteromonas translucida (strain TAC 125)).